Consider the following 1828-residue polypeptide: InaD-like protein (1828 aa).

Residues 5–65 (PAPDKLQVLQ…SIKQLKGQLS (61 aa)) form the L27 domain. PDZ domains follow at residues 134–221 (YIDI…AREP), 248–328 (DVEL…ARDP), and 365–453 (GVEL…VRRK). Residues Ser-459 and Ser-522 each carry the phosphoserine modification. The 87-residue stretch at 553 to 639 (DAELQKYSKL…PFTLVCCRRL (87 aa)) folds into the PDZ 4 domain. Ser-645 bears the Phosphoserine mark. 2 consecutive PDZ domains span residues 686–758 (IVEL…EVLK) and 1070–1162 (IVEI…QSLS). Positions 1168-1220 (IPSVHNKANKIANNQDQNTEEKKEKRQGTPPPPMKLPPPYKAPSDDSDENEEE) are disordered. Pro residues predominate over residues 1196–1208 (TPPPPMKLPPPYK). Ser-1211 is modified (phosphoserine). A PDZ 7 domain is found at 1241-1324 (IIELEKDKNG…KVKLVFIRNE (84 aa)). The tract at residues 1333 to 1362 (APFPVPSSSPSSLEDQSGTEPVSSEEDGSL) is disordered. Residues 1345 to 1354 (LEDQSGTEPV) show a composition bias toward polar residues. PDZ domains follow at residues 1464–1547 (IIEI…YRDE) and 1560–1642 (PVDL…GRLR). Residue Thr-1535 is modified to Phosphothreonine. A compositionally biased stretch (polar residues) spans 1645–1668 (SWTSSRKTSQNSQGSQHSTHSSFH). Residues 1645–1669 (SWTSSRKTSQNSQGSQHSTHSSFHP) form a disordered region. The PDZ 10 domain maps to 1703 to 1789 (TVEIIRELSD…RIILQVVADT (87 aa)). Residues 1805 to 1828 (YHLGSPTAEHHPEDTEEPLQMTAG) are disordered.

Forms a ternary complex with PALS1 and CRB1. Component of a complex whose core is composed of ARHGAP17, AMOT, PALS1, INADL/PATJ and PARD3/PAR3. Forms a heterotrimeric complex composed of MMP5, LIN7B and PATJ; the N-terminal L27 domain of PALS1 interacts with the L27 domain of PATJ and the C-terminal L27 domain of PALS1 interacts with the L27 domain of LIN7B. Component of a complex composed of CRB3, PALS1 and PATJ. As part of the Crumbs complex; interacts with WWP1, the interaction is enhanced by AMOTL2 and facilitates WWP1 localization to the plasma membrane. The Crumbs complex promotes monoubiquitination of AMOTL2 by WWP1, which activates the Hippo signaling pathway. Interacts (via N-terminus) with PALS1/PALS (via PDZ domain). Interacts with TJP3/ZO-3 and CLDN1/claudin-1. Interacts with ASIC3, KCNJ10, KCNJ15, GRIN2A, GRIN2B, GRIN2C, GRIN2D, NLGN2, and HTR2A. Interacts with MPP7. Directly interacts with HTR4. Interacts (via PDZ domain 8) with WWC1 (via the ADDV motif). Interacts with SLC6A4. Interacts (via C-terminus) with ARHGEF18. Interacts with NPHP1. Interacts with PARD3/PAR3. Interacts (via PDZ1-6 domains) with TJP1/ZO1; the interaction is required for attachment and extension of TJP1/ZO1 condensates along the apical cell interface.

The protein resides in the cell junction. It is found in the tight junction. Its subcellular location is the apical cell membrane. The protein localises to the cytoplasm. It localises to the perinuclear region. Its function is as follows. Scaffolding protein that facilitates the localization of proteins to the cell membrane. Required for the correct formation of tight junctions and epithelial apico-basal polarity. Acts (via its L27 domain) as an apical connector and elongation factor for multistranded TJP1/ZO1 condensates that form a tight junction belt, thereby required for the formation of the tight junction-mediated cell barrier. Positively regulates epithelial cell microtubule elongation and cell migration, possibly via facilitating localization of PRKCI/aPKC and PAR3D/PAR3 at the leading edge of migrating cells. Plays a role in the correct reorientation of the microtubule-organizing center during epithelial migration. May regulate the surface expression and/or function of ASIC3 in sensory neurons. May recruit ARHGEF18 to apical cell-cell boundaries. The chain is InaD-like protein from Canis lupus familiaris (Dog).